Consider the following 1799-residue polypeptide: 1,3-beta-glucan synthase component FKS1 (1799 aa).

Residues 1 to 11 (MSYPNPPPPPK) show a composition bias toward pro residues. Residues 1-136 (MSYPNPPPPP…SNAGHRPRDP (136 aa)) form a disordered region. Positions 12 to 23 (GSASFSSSSSDP) are enriched in low complexity. Residues 51-64 (GAGGAGVAPPGQGG) show a composition bias toward gly residues. A compositionally biased stretch (polar residues) spans 91-101 (ASESGWSQNEP). The next 16 helical transmembrane spans lie at 431 to 451 (IWVL…PSIY), 470 to 490 (LGGF…FSYI), 504 to 524 (LIFL…IAFF), 530 to 550 (VALI…IAFA), 591 to 611 (FLLW…FLTL), 648 to 668 (VMFV…YVIW), 1268 to 1288 (NILV…LGTL), 1323 to 1343 (CIIS…VQEL), 1422 to 1442 (LVLL…YFWI), 1446 to 1466 (GLCV…DFII), 1527 to 1547 (IGEI…YLFI), 1563 to 1583 (IAII…TLFL), 1605 to 1625 (ALAH…LWFL), 1635 to 1655 (LGII…IAVF), 1704 to 1724 (DFIA…IPYF), and 1762 to 1782 (GLLY…PIIF).

This sequence belongs to the glycosyltransferase 48 family. In terms of assembly, component of the 1,3-beta-glucan synthase (GS) complex composed of a catalytic subunit FKS1 and a regulatory subunit RHO1.

The protein resides in the cell membrane. The enzyme catalyses [(1-&gt;3)-beta-D-glucosyl](n) + UDP-alpha-D-glucose = [(1-&gt;3)-beta-D-glucosyl](n+1) + UDP + H(+). Activated by magnesium ions. Inhibited by caspofungin and cilofungin. Functionally, catalytic subunit of the 1,3-beta-glucan synthase (GS) complex. Synthesizes 1,3-beta-glucan, a major structural component of the yeast cell wall. Involved in cell wall synthesis, maintenance and remodeling. The polypeptide is 1,3-beta-glucan synthase component FKS1 (Cryptococcus neoformans var. grubii serotype A (strain H99 / ATCC 208821 / CBS 10515 / FGSC 9487) (Filobasidiella neoformans var. grubii)).